Consider the following 214-residue polypeptide: MSGTFISFEGPDGAGKTSALQAITTQIKPVLGDQLVITREPGGNPISESIRAIILDRANTAMDYRTEALLYAAARRQHLAQTILPALAADKLVLCDRYVDSSVAYQGAGRQIGEDAVAQMNTFATDGLLPAVTVYFDVPAEIGLRRIQAHRDPQKVDRLDVEQAAFHDRVRAAYLRLQAAHPDRIKLIDATQKREAVVTTALTLIKQAAQNYFD.

10 to 17 lines the ATP pocket; it reads GPDGAGKT.

Belongs to the thymidylate kinase family.

It carries out the reaction dTMP + ATP = dTDP + ADP. In terms of biological role, phosphorylation of dTMP to form dTDP in both de novo and salvage pathways of dTTP synthesis. This Levilactobacillus brevis (strain ATCC 367 / BCRC 12310 / CIP 105137 / JCM 1170 / LMG 11437 / NCIMB 947 / NCTC 947) (Lactobacillus brevis) protein is Thymidylate kinase.